The chain runs to 79 residues: MKLHSLISVLLLFVTLIPKGKTGVIPGQKQCIALKGVCRDKLCSTLDDTIGICNEGKKCCRRWWILEPYPTPVPKGKSP.

The signal sequence occupies residues 1–22 (MKLHSLISVLLLFVTLIPKGKT). 2 disulfide bridges follow: Cys-38–Cys-53 and Cys-43–Cys-60.

The protein belongs to the beta-defensin family.

The protein resides in the secreted. In terms of biological role, antimicrobial host-defense peptide. The chain is Beta-defensin 130 from Pan troglodytes (Chimpanzee).